The chain runs to 240 residues: Probable transcriptional regulatory protein Hac_0344 (240 aa).

Belongs to the TACO1 family.

It is found in the cytoplasm. The chain is Probable transcriptional regulatory protein Hac_0344 from Helicobacter acinonychis (strain Sheeba).